We begin with the raw amino-acid sequence, 213 residues long: Ribosomal RNA large subunit methyltransferase E (213 aa).

Residues Gly60, Trp62, Asp80, Asp96, and Asp121 each coordinate S-adenosyl-L-methionine. Lys161 serves as the catalytic Proton acceptor.

This sequence belongs to the class I-like SAM-binding methyltransferase superfamily. RNA methyltransferase RlmE family.

The protein localises to the cytoplasm. The catalysed reaction is uridine(2552) in 23S rRNA + S-adenosyl-L-methionine = 2'-O-methyluridine(2552) in 23S rRNA + S-adenosyl-L-homocysteine + H(+). Functionally, specifically methylates the uridine in position 2552 of 23S rRNA at the 2'-O position of the ribose in the fully assembled 50S ribosomal subunit. The protein is Ribosomal RNA large subunit methyltransferase E of Xylella fastidiosa (strain M23).